A 265-amino-acid chain; its full sequence is 4-hydroxy-tetrahydrodipicolinate reductase (265 aa).

Residue 9 to 14 (GARGKM) participates in NAD(+) binding. NADP(+) is bound at residue K37. NAD(+) is bound by residues 99–101 (GTT) and 125–128 (APNF). H155 serves as the catalytic Proton donor/acceptor. H156 is a binding site for (S)-2,3,4,5-tetrahydrodipicolinate. Residue K159 is the Proton donor of the active site. 165-166 (GT) provides a ligand contact to (S)-2,3,4,5-tetrahydrodipicolinate.

Belongs to the DapB family.

The protein localises to the cytoplasm. It catalyses the reaction (S)-2,3,4,5-tetrahydrodipicolinate + NAD(+) + H2O = (2S,4S)-4-hydroxy-2,3,4,5-tetrahydrodipicolinate + NADH + H(+). The catalysed reaction is (S)-2,3,4,5-tetrahydrodipicolinate + NADP(+) + H2O = (2S,4S)-4-hydroxy-2,3,4,5-tetrahydrodipicolinate + NADPH + H(+). The protein operates within amino-acid biosynthesis; L-lysine biosynthesis via DAP pathway; (S)-tetrahydrodipicolinate from L-aspartate: step 4/4. Functionally, catalyzes the conversion of 4-hydroxy-tetrahydrodipicolinate (HTPA) to tetrahydrodipicolinate. This Lysinibacillus sphaericus (strain C3-41) protein is 4-hydroxy-tetrahydrodipicolinate reductase.